The primary structure comprises 788 residues: Multi-functional prenyltransferase ltmE (788 aa).

Substrate-binding residues include lysine 18 and histidine 51. Aspartate 58 provides a ligand contact to Mg(2+). Substrate-binding residues include arginine 67, lysine 151, threonine 152, glutamine 182, asparagine 189, and lysine 199. Residues 283-337 are disordered; sequence DTLDGDDLTRPSTITQHEQDDHVDRAAIDAKSDASGSSNKSLTPPETAPTTDTLS. Over residues 299–314 the composition is skewed to basic and acidic residues; sequence HEQDDHVDRAAIDAKS. Residues 316–337 are compositionally biased toward polar residues; the sequence is ASGSSNKSLTPPETAPTTDTLS. 404-405 provides a ligand contact to L-tryptophan; sequence MA. The substrate site is built by arginine 427, arginine 599, lysine 601, tyrosine 603, and tyrosine 687.

The protein in the N-terminal section; belongs to the FPP/GGPP synthase family. In the C-terminal section; belongs to the tryptophan dimethylallyltransferase family. It depends on Mg(2+) as a cofactor.

The protein operates within secondary metabolite biosynthesis. Its function is as follows. Multi-functional prenyltransferase; part of the gene cluster that mediates the biosynthesis of lolitrems, indole-diterpene mycotoxins that are potent tremorgens in mammals, and are synthesized by clavicipitaceous fungal endophytes in association with their grass hosts. The geranylgeranyl diphosphate (GGPP) synthase ltmG is proposed to catalyze the first step in lolitrem biosynthesis. LtmG catalyzes a series of iterative condensations of isopentenyl diphosphate (IPP) with dimethylallyl diphosphate (DMAPP), geranyl diphosphate (GPP), and farnesyl diphosphate (FPP), to form GGPP. GGPP then condenses with indole-3-glycerol phosphate to form 3-geranylgeranylindole, an acyclic intermediate, to be incorporated into paxilline. Either ltmG or ltmC could be responsible for this step, as both are putative prenyl transferases. The FAD-dependent monooxygenase ltmM then catalyzes the epoxidation of the two terminal alkenes of the geranylgeranyl moiety, which is subsequently cyclized by ltmB, to paspaline. The cytochrome P450 monooxygenases ltmQ and ltmP can sequentially oxidize paspaline to terpendole E and terpendole F. Alternatively, ltmP converts paspaline to an intermediate which is oxidized by ltmQ to terpendole F. LtmF, ltmK, ltmE and ltmJ appear to be unique to the epichloe endophytes. The prenyltransferase ltmF is involved in the 27-hydroxyl-O-prenylation. The cytochrome P450 monooxygenase ltmK is required for the oxidative acetal ring formation. The multi-functional prenyltransferase ltmE is required for C20- and C21-prenylations of the indole ring of paspalanes and acts together with the cytochrome P450 monooxygenase ltmJ to yield lolitremanes by multiple oxidations and ring closures. The stereoisomer pairs of lolitriol and lolitrem N or lolitrem B and lolitrem F may be attributed to variations in the way in which ring closure can occur under the action of ltmJ. While the major product of this pathway is lolitrem B, the prenyl transferases and cytochrome P450 monooxygenases identified in this pathway have a remarkable versatility in their regio- and stereo-specificities to generate a diverse range of metabolites that are products of a metabolic grid rather than a linear pathway. The chain is Multi-functional prenyltransferase ltmE from Epichloe festucae var. lolii (Neotyphodium lolii).